The following is a 599-amino-acid chain: Cytochrome P450 monooxygenase ALT8 (599 aa).

The next 2 membrane-spanning stretches (helical) occupy residues 4 to 21 and 36 to 56; these read LACV…VYLG and ILFG…PAYF. A glycan (N-linked (GlcNAc...) asparagine) is linked at Asn-127. The segment covering 495–504 has biased composition (low complexity); it reads DDSSAASPSF. The disordered stretch occupies residues 495 to 522; that stretch reads DDSSAASPSFGGSGKRKSQYTDTHKEPS. Heme is bound at residue Cys-539.

This sequence belongs to the cytochrome P450 family. Heme serves as cofactor.

It is found in the membrane. Its pathway is secondary metabolite biosynthesis. Its function is as follows. Cytochrome P450 monooxygenase; part of the gene cluster that mediates the biosynthesis of the host-selective toxins (HSTs) AAL-toxins, sphinganine-analog mycotoxins responsible for Alternaria stem canker on tomato by the tomato pathotype. The biosynthesis starts with the polyketide synthase ALT1-catalyzed C-16 carbon chain assembly from one starter acetyl-CoA unit with malonyl-CoA extender units. ALT1 also selectively transfers methyl groups at the first and the third cycle of chain elongation for AAL toxin. The C-16 polyketide chain is released from the enzyme by a nucleophilic attack of a carbanion, which is derived from R-carbon of glycin by decarboxylation, on the carbonyl carbon of polyketide acyl chain. This step is probably catalyzed by a pyridoxal 5'-phosphate-dependent aminoacyl transferase ALT4. The respective functions of the other enzymes encoded by the cluster have still to be elucidated. The sphingosine N-acyltransferase-like protein ALT7 seems not to act as a resistance/self-tolerance factor against the toxin in the toxin biosynthetic gene cluster, contrary to what is expected. This Alternaria alternata (Alternaria rot fungus) protein is Cytochrome P450 monooxygenase ALT8.